A 191-amino-acid chain; its full sequence is Cytochrome c biogenesis ATP-binding export protein CcmA (191 aa).

The ABC transporter domain maps to 6 to 189 (LVATDIACRR…RVRTLAIRNF (184 aa)). 38 to 45 (GANGIGKS) contributes to the ATP binding site.

This sequence belongs to the ABC transporter superfamily. CcmA exporter (TC 3.A.1.107) family. As to quaternary structure, the complex is composed of two ATP-binding proteins (CcmA) and two transmembrane proteins (CcmB).

It localises to the cell inner membrane. The enzyme catalyses heme b(in) + ATP + H2O = heme b(out) + ADP + phosphate + H(+). Its function is as follows. Part of the ABC transporter complex CcmAB involved in the biogenesis of c-type cytochromes; once thought to export heme, this seems not to be the case, but its exact role is uncertain. Responsible for energy coupling to the transport system. The polypeptide is Cytochrome c biogenesis ATP-binding export protein CcmA (Novosphingobium aromaticivorans (strain ATCC 700278 / DSM 12444 / CCUG 56034 / CIP 105152 / NBRC 16084 / F199)).